We begin with the raw amino-acid sequence, 362 residues long: Heat-inducible transcription repressor HrcA (362 aa).

The protein belongs to the HrcA family.

In terms of biological role, negative regulator of class I heat shock genes (grpE-dnaK-dnaJ and groELS operons). Prevents heat-shock induction of these operons. The protein is Heat-inducible transcription repressor HrcA of Bradyrhizobium sp. (strain BTAi1 / ATCC BAA-1182).